The chain runs to 625 residues: Putative surface protein bspA-like (625 aa).

Over 1 to 548 (MMTPGKSSKT…KAIKGGEIAG (548 aa)) the chain is Extracellular. N15 carries N-linked (GlcNAc...) asparagine glycosylation. LRR repeat units lie at residues 38-60 (CSSFTSIIIPNSVTSIGTKAFTG), 61-83 (CSSLTSITIGNSVTSFGQEAFSE), 85-106 (SSITSITIPNSVTTIRDFAFSG), 107-129 (CSKLTSITIPNSVTSLGSHAFRG), 153-175 (CSSLTSITIPNSVTSIYSSAFYG), 176-198 (CSSLTSITIPDSVLDFGSAAFQE), 200-221 (SKLTNIKIGNNVDSIGSLAFKR), 222-245 (CSSLTNITIPDSVTTIANSAFYEC), 247-267 (KLTSITIGKSVTRIEGNAFSK), 271-293 (LTSITIKTTNDITSSITTDVFLN), 325-347 (IPKSDSNSMIRLQEITSLPTLTH), 348-368 (FTNLNKVTIENINELTIPESF), and 369-392 (IEGDNFEILITNNIKSIDPNAFKD). The N-linked (GlcNAc...) asparagine glycan is linked to N227. The interval 439 to 538 (KQSEENPNQP…TDDPSKSKEN (100 aa)) is disordered. Positions 443–526 (ENPNQPGENP…QPGENPSQPG (84 aa)) are enriched in low complexity. Residues 549–571 (IIIGSLIGICLVVAICFGVYYYF) form a helical membrane-spanning segment. At 572-625 (MRIKPKNKNDDNEGNQEDTIANGTNEVTNENVLATFDEQPNNESDSNGLDSAEV) the chain is on the cytoplasmic side. The disordered stretch occupies residues 577-625 (KNKNDDNEGNQEDTIANGTNEVTNENVLATFDEQPNNESDSNGLDSAEV). The segment covering 588 to 625 (EDTIANGTNEVTNENVLATFDEQPNNESDSNGLDSAEV) has biased composition (polar residues).

The protein localises to the cell membrane. Its function is as follows. May bind host tissue. The chain is Putative surface protein bspA-like (BSPAL1) from Trichomonas vaginalis.